A 229-amino-acid polypeptide reads, in one-letter code: ATP synthase subunit a (229 aa).

A run of 6 helical transmembrane segments spans residues Ala25 to Ala45, Phe82 to Ile102, Gly104 to Val124, Phe142 to Leu162, Leu181 to Met201, and Gly202 to Gln222.

This sequence belongs to the ATPase A chain family. In terms of assembly, F-type ATPases have 2 components, CF(1) - the catalytic core - and CF(0) - the membrane proton channel. CF(1) has five subunits: alpha(3), beta(3), gamma(1), delta(1), epsilon(1). CF(0) has three main subunits: a(1), b(2) and c(9-12). The alpha and beta chains form an alternating ring which encloses part of the gamma chain. CF(1) is attached to CF(0) by a central stalk formed by the gamma and epsilon chains, while a peripheral stalk is formed by the delta and b chains.

The protein localises to the cell inner membrane. In terms of biological role, key component of the proton channel; it plays a direct role in the translocation of protons across the membrane. The chain is ATP synthase subunit a from Geobacter sp. (strain M21).